Reading from the N-terminus, the 1255-residue chain is RNA-directed RNA polymerase (1255 aa).

The 209-residue stretch at 548 to 756 folds into the RdRp catalytic domain; it reads LIPLGLSPYA…QQRVSCGTFV (209 aa).

The protein localises to the virion. It catalyses the reaction RNA(n) + a ribonucleoside 5'-triphosphate = RNA(n+1) + diphosphate. In terms of biological role, RNA-directed RNA polymerase that is involved in transcription and genome replication. Following infection, it catalyzes the synthesis of fully conservative plus strands. After core assembly, which consists in recruitment of one capped plus-strand for each genomic segments and polymerase complexes, the polymerase switches mode and catalyzes the synthesis of complementary minus-strands. The chain is RNA-directed RNA polymerase from Oryza latifolia (Indian wild rice).